Here is a 304-residue protein sequence, read N- to C-terminus: dTDP-4-dehydrorhamnose reductase (304 aa).

Residues 15 to 17 (GQL), 41 to 42 (DI), and 63 to 65 (AYT) contribute to the NADH site. NADPH contacts are provided by residues 16-17 (QL), 41-42 (DI), and 63-65 (AYT). 104 to 105 (TD) serves as a coordination point for dTDP-beta-L-rhamnose. NADH-binding residues include Tyr132 and Lys136. NADPH contacts are provided by Tyr132 and Lys136. Residue Tyr132 is the Proton donor/acceptor of the active site. A dTDP-beta-L-rhamnose-binding site is contributed by Trp157.

The protein belongs to the dTDP-4-dehydrorhamnose reductase family. Mg(2+) serves as cofactor.

It carries out the reaction dTDP-beta-L-rhamnose + NADP(+) = dTDP-4-dehydro-beta-L-rhamnose + NADPH + H(+). It functions in the pathway carbohydrate biosynthesis; dTDP-L-rhamnose biosynthesis. Its function is as follows. Involved in the biosynthesis of the dTDP-L-rhamnose which is a component of the critical linker, D-N-acetylglucosamine-L-rhamnose disaccharide, which connects the galactan region of arabinogalactan to peptidoglycan via a phosphodiester linkage. Catalyzes the reduction of dTDP-6-deoxy-L-lyxo-4-hexulose to yield dTDP-L-rhamnose. The protein is dTDP-4-dehydrorhamnose reductase of Mycobacterium tuberculosis (strain CDC 1551 / Oshkosh).